Reading from the N-terminus, the 2180-residue chain is MSNRFKGSSTGHYVRAGAGGQPNTYGLTAHQLLQSKKVDDIDAMMGFERHISPQDGAGAGNSERIGWLCNMHPTVVADELNAGASGVGVAGVDFYFLDEEGGSFKSTILYDPYFLLSCQDSNRVHDVEEFLKKYLEGCLKTVEVVQKDDLAMDNHLVGLKRTLLKLNFVNTNNLFEARKLLRPILKDNEENQQQRDIYSLNDTTNRRDAKMLIDDIREYDVPYHVRVCIDKEIRVGKWYRVTSGGLVEYTDKVAFADPVVLAFDIETTKAPLKFPDSAIDQIMMISYMIDGEGYLITNREIISEDIEDFEYTPKPEYQGLFTVFNEEDERSLLERFFEHIRDVRPTVISTFNGDFFDWPFVEARSKIRGLSMFDEIGFAPDSEGEYKSSYCAHMDCYRWVKRDSYLPQGSQGLKAVTQVKLGYNPIELDPELMTPYAYEKPQHLSEYSVSDAVATYYLYMKYVHPFIFSLCTVLPLNPDEVLRKGTGTLCEMLLMVQAYDHGILLPNKHTEPIERFYDGHLLESETYVGGHVESLEAGVFRSDIDCDFTIDSTAIDELLQDLPHALKFCIEVENKTKVEDVLDFEDILNTITEQLQELKMNNKRKELPLIYHVDVASMYPNIMTTNRLQPDSMKTERDCASCDFNRPGKKCDRRLKWTWRGEFLPAKMDEYAMVKRALMNEVFPNKYKNTTKKLLTFDELSYSEQVSHIKKRLSEYSRKVYHRVKVTESVVRESIVCQRENPFYVNTVRSFRDRRYEFKGHAKTWKKKLSQIDPEDKVARDEARKMIVLYDSLQLAHKVILNSFYGYAMRKGSRWYSIEMAGITCSTGATIIQMARALVERIGRPLELDTDGIWCIIPRSFPENFEFTLKNGKKLYLSYPCSMLNYKVHQSFTNHQYQELVNDAKHKYKISSDNSIFFEVDGPYKAMILPTSKEEGKGIKKRYAVFNEDGSLAELKGFELKRRGELQLIKNFQQDIFKVFLEGRTLEECYGAVAKVANRWLDILDSKGSMLETEDLIDLICENKSMSKKLKEYDGQKSTSITTARRLGEFLGQEMVKDAGLQCKFIISSKPANAPVTERAIPVAIFSADHNIKKLFLRKWLLDSSLDNFDLRAILDWNYYRERLASVIQKIITIPAALQNVNNPVPRVDHPEWLRKKIATSESKFKQTSIGRFFKKSNGMPEIADIEDNAFSTESSSGAKVARVVTKKKRKRENETKDNQPVLPSVMPAIDEDYVGWLNYQKIKWQLQAEERHRRKQLFGSSSTLNDRSALGNIIKKHAESYANSDWEILQYKNSSEPGVVEVHALISGKVQSLKFHIHKTVFLKFKTDTLPPGGIPNCVIEKSNAILPNTKEDSYNTSSSLFRVTCPETVFLDEQNKVSSVFNSGNILGIYESTIPASERAIMELGNAVKFKSNVMGALSKGLQHGFQAKNLLSVTSERYLQRFDLEVIYLLNLTTNLGYEFFVLFNGWGDQAKVFVLKPSIAAQELSRHALEAAYEQQYLKKVKNFEKFRHYFMPAESAKFELHHFTDKSVLLRSLSKVVSSWSELKGSQLLLLLQSPTPSRLLKSIRILNQLPVVQLSTCELAFPTLNWQDQLIKKTVSHILQLGSWLSNLTILSNYTRIPICNLNLTNLGYVIDIMYARRLKLENIVLWWNQKQPLPDRGGIQNEYNPHTLSLATDLTSPVINNPEFYDSAVLEIEVNNLLVNTILTSTLINEAEGGDVAGPESGGREGGGFVEDAFSTASVNILRSLLKDLWDDALQNNSTADSLVHSFIGWVQSVDSKLFDYTLRYYVNMLTKKALFQLINEFRFMGSQVVFLDRNKILLKTSKNTIDNSYAYGQYLIKAIRTRPLFSYLDLKIVRYWDILLWMDQYNHGGCACLKIEEKERQDIQAYSSWHIKNFLAPIYQQEFDDWLVIILDSMIKCKQQFYELSGTQRLTQLPNRSQAADEDDENSVFAGFTKRFYQPFINRISKLYKTQQEYILDPNFRADYIIPDLPGRNPKMKAGNPLLELVKSLCHVLLLCKERTLEVRALRKEALEVFEIREFDSSASFENPASSLIINNFMCENCAYFSDLDICMSDLRSMFKCSKCYRTLRKPFIEENLIQKLQIQTIAYISQDLRCAKCRKIKSDTMSAYCTCSGKWVQTISKDTYLKNVQLFYHVAEYFGFSLLLSAIKGGI.

Zn(2+) contacts are provided by cysteine 2067, cysteine 2070, cysteine 2089, and cysteine 2092. The CysA-type zinc finger occupies 2067 to 2092; the sequence is CENCAYFSDLDICMSDLRSMFKCSKC. Cysteine 2123, cysteine 2126, cysteine 2138, and cysteine 2140 together coordinate [4Fe-4S] cluster. Positions 2123 to 2140 match the CysB motif motif; the sequence is CAKCRKIKSDTMSAYCTC.

It belongs to the DNA polymerase type-B family. As to quaternary structure, heterotetramer. Consists of 4 subunits: POL2, DPB2, DPB3 and DPB4. [4Fe-4S] cluster is required as a cofactor.

The protein resides in the nucleus. The enzyme catalyses DNA(n) + a 2'-deoxyribonucleoside 5'-triphosphate = DNA(n+1) + diphosphate. In terms of biological role, DNA polymerase II participates in chromosomal DNA replication. The protein is DNA polymerase epsilon catalytic subunit A (POL2) of Eremothecium gossypii (strain ATCC 10895 / CBS 109.51 / FGSC 9923 / NRRL Y-1056) (Yeast).